Here is a 605-residue protein sequence, read N- to C-terminus: uncharacterized protein (605 aa).

The disordered stretch occupies residues 22–93 (FTEPARFYPS…KQGTAVHGAE (72 aa)). Over residues 46–57 (SENASSSVPSHS) the composition is skewed to low complexity.

This is an uncharacterized protein from Treponema pallidum (strain Nichols).